A 599-amino-acid chain; its full sequence is Aspartate--tRNA(Asp/Asn) ligase (599 aa).

Glu-169 contributes to the L-aspartate binding site. The interval 193-196 is aspartate; it reads QLFK. Arg-215 serves as a coordination point for L-aspartate. ATP-binding positions include 215–217 and Gln-224; that span reads RDE. His-447 is a binding site for L-aspartate. Glu-481 is a binding site for ATP. Position 488 (Arg-488) interacts with L-aspartate. Residue 533–536 coordinates ATP; that stretch reads GWDR.

This sequence belongs to the class-II aminoacyl-tRNA synthetase family. Type 1 subfamily. In terms of assembly, homodimer.

The protein resides in the cytoplasm. It catalyses the reaction tRNA(Asx) + L-aspartate + ATP = L-aspartyl-tRNA(Asx) + AMP + diphosphate. In terms of biological role, aspartyl-tRNA synthetase with relaxed tRNA specificity since it is able to aspartylate not only its cognate tRNA(Asp) but also tRNA(Asn). Reaction proceeds in two steps: L-aspartate is first activated by ATP to form Asp-AMP and then transferred to the acceptor end of tRNA(Asp/Asn). This chain is Aspartate--tRNA(Asp/Asn) ligase, found in Pseudarthrobacter chlorophenolicus (strain ATCC 700700 / DSM 12829 / CIP 107037 / JCM 12360 / KCTC 9906 / NCIMB 13794 / A6) (Arthrobacter chlorophenolicus).